A 252-amino-acid polypeptide reads, in one-letter code: Phosphate import ATP-binding protein PstB (252 aa).

An ABC transporter domain is found at Ile6–Ile247. Gly38–Ser45 serves as a coordination point for ATP.

Belongs to the ABC transporter superfamily. Phosphate importer (TC 3.A.1.7) family. The complex is composed of two ATP-binding proteins (PstB), two transmembrane proteins (PstC and PstA) and a solute-binding protein (PstS).

The protein resides in the cell membrane. It catalyses the reaction phosphate(out) + ATP + H2O = ADP + 2 phosphate(in) + H(+). In terms of biological role, part of the ABC transporter complex PstSACB involved in phosphate import. Responsible for energy coupling to the transport system. This Lactobacillus delbrueckii subsp. bulgaricus (strain ATCC 11842 / DSM 20081 / BCRC 10696 / JCM 1002 / NBRC 13953 / NCIMB 11778 / NCTC 12712 / WDCM 00102 / Lb 14) protein is Phosphate import ATP-binding protein PstB.